A 258-amino-acid chain; its full sequence is Isoprenyl transferase (258 aa).

The active site involves aspartate 38. Aspartate 38 contacts Mg(2+). Substrate is bound by residues 39–42, tryptophan 43, arginine 51, histidine 55, and 83–85; these read GNGR and STE. Asparagine 86 acts as the Proton acceptor in catalysis. Substrate is bound by residues tryptophan 87, arginine 89, arginine 206, and 212-214; that span reads RIS. Position 225 (glutamate 225) interacts with Mg(2+).

This sequence belongs to the UPP synthase family. As to quaternary structure, homodimer. The cofactor is Mg(2+).

Its function is as follows. Catalyzes the condensation of isopentenyl diphosphate (IPP) with allylic pyrophosphates generating different type of terpenoids. This chain is Isoprenyl transferase, found in Bacillus thuringiensis subsp. konkukian (strain 97-27).